The following is a 353-amino-acid chain: MELTELLLVVMLLLTARLTLSSPAPPACDLRVLSKLLRDSHVLHSRLSQCPEVHPLPTPVLLPAVDFSLGEWKTQMEETKAQDILGAVTLLLEGVMAARGQLGPTCLSSLLGQLSGQVRLLLGALQSLLGTQLPPQGRTTAHKDPNAIFLSFQHLLRGKVRFLMLVGGSTLCVRRAPPTTAVPSRTSLVLTLNELPNRTSGLLETNFTASARTTGSGLLKWQQGFRAKIPGLLNQTSRSLDQIPGYLNRIHELLNGTRGLFPGPSRRTLGAPDISSGTSDTGSLPPNLQPGYSPSPTHPPTGQYTLFPLPPTLPTPVVQLHPLLPDPSAPTPTPTSPLLNTSYTHSQNLSQEG.

The first 21 residues, Met1–Ser21, serve as a signal peptide directing secretion. The O-linked (GalNAc...) serine glycan is linked to Ser22. 2 disulfides stabilise this stretch: Cys28–Cys172 and Cys50–Cys106. Residues Thr58, Thr131, Thr179, and Thr180 are each glycosylated (O-linked (GalNAc...) threonine). Ser184 carries an O-linked (GalNAc...) serine glycan. Asn197 and Asn206 each carry an N-linked (GlcNAc...) (complex) asparagine glycan. A glycan (O-linked (GalNAc...) threonine) is linked at Thr213. N-linked (GlcNAc...) (complex) asparagine glycans are attached at residues Asn234 and Asn255. The interval Thr257 to Gly353 is disordered. Ser265 carries an O-linked (GalNAc...) serine glycan. Residues Ser275–Tyr304 show a composition bias toward polar residues. A compositionally biased stretch (pro residues) spans Leu324–Thr335. Asn340 and Asn348 each carry an N-linked (GlcNAc...) asparagine glycan. Over residues Tyr343–Gly353 the composition is skewed to polar residues.

It belongs to the EPO/TPO family. As to quaternary structure, interacts with MPL/TPOR.

The protein resides in the secreted. In terms of biological role, lineage-specific cytokine affecting the proliferation and maturation of megakaryocytes from their committed progenitor cells. It acts at a late stage of megakaryocyte development. It may be the major physiological regulator of circulating platelets. This Homo sapiens (Human) protein is Thrombopoietin (THPO).